Consider the following 570-residue polypeptide: Probable glucomannan 4-beta-mannosyltransferase 11 (570 aa).

A helical transmembrane segment spans residues 57–77 (LAMTVMILAEKLFVAAVCLAV). Residue Asp-157 is part of the active site. Residues Asp-216 and Asp-218 each contribute to the substrate site. Asp-310 is a catalytic residue. Transmembrane regions (helical) follow at residues 389–409 (IAAH…SVWL), 412–432 (IEIP…CKAV), 522–542 (YSEI…VLYA), and 548–568 (IFLF…IGVC).

This sequence belongs to the glycosyltransferase 2 family. Plant cellulose synthase-like A subfamily.

Its subcellular location is the golgi apparatus membrane. The enzyme catalyses GDP-mannose + (glucomannan)n = GDP + (glucomannan)n+1.. Probable mannan synthase which consists of a 4-beta-mannosyltransferase activity on mannan using GDP-mannose. The beta-1,4-mannan product is the backbone for galactomannan synthesis by galactomannan galactosyltransferase. Galactomannan is a noncellulosic polysaccharides of plant cell wall. The protein is Probable glucomannan 4-beta-mannosyltransferase 11 of Oryza sativa subsp. japonica (Rice).